We begin with the raw amino-acid sequence, 1331 residues long: DNA replication ATP-dependent helicase/nuclease JHS1 (1331 aa).

Residues 1–98 (MPPRKKPKSS…DMDQQLTEAS (98 aa)) form a disordered region. The Nuclear localization signal signature appears at 2–8 (PPRKKPK). Polar residues predominate over residues 11 to 31 (ALKSNKQSSANHSSQPSTFGI). Over residues 40–52 (QNSQSTSNSHTST) the composition is skewed to low complexity. The segment covering 57 to 81 (DQQNVNGLASDTAVLTPQNPLGTSN) has biased composition (polar residues). Residues 82-91 (EKPDESKDMD) show a composition bias toward basic and acidic residues. Residues 362 to 811 (ECALYLWDEW…CKLRTGDRVI (450 aa)) form a nuclease activity region. 4 residues coordinate [4Fe-4S] cluster: Cys422, Cys666, Cys669, and Cys675. The tract at residues 812–1331 (LRTEVSHLTV…LNLLPGDLKP (520 aa)) is helicase activity. A UvrD-like helicase ATP-binding domain is found at 924 to 1271 (NNDQRQAILK…VRSREKPRSS (348 aa)). 945–952 (GMPGTGKT) provides a ligand contact to ATP.

The protein belongs to the DNA2/NAM7 helicase family. It depends on [4Fe-4S] cluster as a cofactor. Strongly expressed in meristems, including both root and shoot apical meristems (RAM and SAM). Also present in the vasculature and in young floral tissues.

Its subcellular location is the nucleus. The protein resides in the chromosome. The enzyme catalyses ATP + H2O = ADP + phosphate + H(+). Functionally, essential protein required during embryogenesis. Key enzyme involved in DNA replication and damage repair, shoot apical meristem (SAM) maintenance, and development. Involved in Okazaki fragments processing. Possesses different enzymatic activities, such as single-stranded DNA (ssDNA)-dependent ATPase, 5'-3' helicase and endonuclease activities. While the ATPase and endonuclease activities are well-defined and play a key role in Okazaki fragments processing and DSB repair, the 5'-3' DNA helicase activity is atypical: it cannot load onto its tracking strand internally and has an absolute free 5'-end requirement. This is DNA replication ATP-dependent helicase/nuclease JHS1 from Arabidopsis thaliana (Mouse-ear cress).